The sequence spans 138 residues: Large ribosomal subunit protein eL27 (138 aa).

It belongs to the eukaryotic ribosomal protein eL27 family.

The protein is Large ribosomal subunit protein eL27 (RPL27) of Solanum tuberosum (Potato).